Consider the following 334-residue polypeptide: Lipoyl synthase (334 aa).

A disordered region spans residues 8-33; the sequence is LNNDTRPKVEAPARPRHPEKAHRPDT. The span at 12–33 shows a compositional bias: basic and acidic residues; that stretch reads TRPKVEAPARPRHPEKAHRPDT. 7 residues coordinate [4Fe-4S] cluster: Cys-68, Cys-73, Cys-79, Cys-94, Cys-98, Cys-101, and Ser-307. The region spanning 80-296 is the Radical SAM core domain; that stretch reads WEKRHATFMI…ETTAYAKGFL (217 aa).

Belongs to the radical SAM superfamily. Lipoyl synthase family. Requires [4Fe-4S] cluster as cofactor.

The protein localises to the cytoplasm. The enzyme catalyses [[Fe-S] cluster scaffold protein carrying a second [4Fe-4S](2+) cluster] + N(6)-octanoyl-L-lysyl-[protein] + 2 oxidized [2Fe-2S]-[ferredoxin] + 2 S-adenosyl-L-methionine + 4 H(+) = [[Fe-S] cluster scaffold protein] + N(6)-[(R)-dihydrolipoyl]-L-lysyl-[protein] + 4 Fe(3+) + 2 hydrogen sulfide + 2 5'-deoxyadenosine + 2 L-methionine + 2 reduced [2Fe-2S]-[ferredoxin]. It participates in protein modification; protein lipoylation via endogenous pathway; protein N(6)-(lipoyl)lysine from octanoyl-[acyl-carrier-protein]: step 2/2. In terms of biological role, catalyzes the radical-mediated insertion of two sulfur atoms into the C-6 and C-8 positions of the octanoyl moiety bound to the lipoyl domains of lipoate-dependent enzymes, thereby converting the octanoylated domains into lipoylated derivatives. This chain is Lipoyl synthase, found in Methylorubrum populi (strain ATCC BAA-705 / NCIMB 13946 / BJ001) (Methylobacterium populi).